Here is a 118-residue protein sequence, read N- to C-terminus: Large ribosomal subunit protein bL20 (118 aa).

This sequence belongs to the bacterial ribosomal protein bL20 family.

Functionally, binds directly to 23S ribosomal RNA and is necessary for the in vitro assembly process of the 50S ribosomal subunit. It is not involved in the protein synthesizing functions of that subunit. This Thermosipho melanesiensis (strain DSM 12029 / CIP 104789 / BI429) protein is Large ribosomal subunit protein bL20.